A 216-amino-acid chain; its full sequence is Probable GTP-binding protein EngB (216 aa).

The region spanning 27–201 (EGIEVAFAGR…REKLDTWFSE (175 aa)) is the EngB-type G domain. Residues 35-42 (GRSNAGKS), 62-66 (GRTQL), 80-83 (DLPG), 147-150 (TKAD), and 180-182 (FSS) each bind GTP. Residues Ser42 and Thr64 each contribute to the Mg(2+) site.

This sequence belongs to the TRAFAC class TrmE-Era-EngA-EngB-Septin-like GTPase superfamily. EngB GTPase family. Mg(2+) serves as cofactor.

Necessary for normal cell division and for the maintenance of normal septation. In Yersinia pestis bv. Antiqua (strain Angola), this protein is Probable GTP-binding protein EngB.